Reading from the N-terminus, the 58-residue chain is uncharacterized protein (58 aa).

The chain crosses the membrane as a helical span at residues 12 to 32 (VMTLLITISILIVLAVLLVTI).

It is found in the cell membrane. This is an uncharacterized protein from Bacillus subtilis (strain 168).